The following is a 263-amino-acid chain: Isatin hydrolase (263 aa).

62–66 (FFAWN) provides a ligand contact to substrate. Mn(2+)-binding residues include H73, H77, and D79. H83 (proton donor/acceptor) is an active-site residue. A substrate-binding site is contributed by H212.

This sequence belongs to the Cyclase 1 superfamily. In terms of assembly, homodimer. Requires Mn(2+) as cofactor.

The enzyme catalyses isatin + H2O = isatinate + H(+). Its activity is regulated as follows. Inhibited by thioisatinate. In terms of biological role, involved in the degradation of the plant hormone indole-3-acetic acid (IAA). Catalyzes the hydrolysis of the cyclic amide bond (lactam) of isatin (1H-indole-2,3-dione) to yield isatinate (2-(2-aminophenyl)-2-oxoacetate). The sequence is that of Isatin hydrolase from Roseibium aggregatum (strain ATCC 25650 / DSM 13394 / JCM 20685 / NBRC 16684 / NCIMB 2208 / IAM 12614 / B1) (Stappia aggregata).